Consider the following 201-residue polypeptide: Urease accessory protein UreG (201 aa).

11-18 (GPVGSGKT) contacts GTP.

Belongs to the SIMIBI class G3E GTPase family. UreG subfamily. Homodimer. UreD, UreF and UreG form a complex that acts as a GTP-hydrolysis-dependent molecular chaperone, activating the urease apoprotein by helping to assemble the nickel containing metallocenter of UreC. The UreE protein probably delivers the nickel.

The protein resides in the cytoplasm. Functionally, facilitates the functional incorporation of the urease nickel metallocenter. This process requires GTP hydrolysis, probably effectuated by UreG. The protein is Urease accessory protein UreG of Synechococcus sp. (strain CC9902).